An 867-amino-acid chain; its full sequence is Retinoblastoma-related protein 1 (867 aa).

The tract at residues 275–476 is domain A; that stretch reads TPVTSAMTTA…EKGSSLYNSL (202 aa). The tract at residues 275 to 722 is pocket; binds RPD3I and RBAP1; the sequence is TPVTSAMTTA…NEVFVPAAKP (448 aa). Positions 477-594 are spacer; that stretch reads IVARPSVASE…PVGGNEKCAD (118 aa). The tract at residues 512-563 is disordered; the sequence is EGLPATPSKKRAAGPDDNADPRSPKRSCNESRNTVVERNLQTPPPKQSHMVS. Basic and acidic residues predominate over residues 530–540; sequence ADPRSPKRSCN. Residues 541-552 show a composition bias toward polar residues; it reads ESRNTVVERNLQ. The domain B stretch occupies residues 595 to 722; that stretch reads VTIHIFFSKI…NEVFVPAAKP (128 aa). Disordered stretches follow at residues 734 to 762 and 843 to 867; these read PEDK…MSPK and QING…ETDT.

This sequence belongs to the retinoblastoma protein (RB) family. Interacts with RPD3I, RBAP1, the Arabidopsis cyclin CYCD3-1, the mastrevirus replication-associated protein A (RepA) and the begomovirus replication-associated protein (Rep). In terms of tissue distribution, ubiquitous.

It localises to the nucleus. In terms of biological role, regulator of biological processes that recruits a histone deacetylase to control gene transcription. May play a role in the entry into mitosis, negatively regulating the cell proliferation. Formation of stable complexes with geminiviridae replication-associated proteins may create a cellular environment which favors viral DNA replication. This chain is Retinoblastoma-related protein 1 (RBR1), found in Zea mays (Maize).